The primary structure comprises 138 residues: Aspartate 1-decarboxylase (138 aa).

Ser25 functions as the Schiff-base intermediate with substrate; via pyruvic acid in the catalytic mechanism. Ser25 is modified (pyruvic acid (Ser)). Thr57 lines the substrate pocket. Residue Tyr58 is the Proton donor of the active site. Substrate is bound at residue 73-75 (GAA). Residues 116 to 138 (ELGGDPAQVPDGSGLKNPRHPEA) are disordered.

Belongs to the PanD family. As to quaternary structure, heterooctamer of four alpha and four beta subunits. The cofactor is pyruvate. Is synthesized initially as an inactive proenzyme, which is activated by self-cleavage at a specific serine bond to produce a beta-subunit with a hydroxyl group at its C-terminus and an alpha-subunit with a pyruvoyl group at its N-terminus.

Its subcellular location is the cytoplasm. The enzyme catalyses L-aspartate + H(+) = beta-alanine + CO2. The protein operates within cofactor biosynthesis; (R)-pantothenate biosynthesis; beta-alanine from L-aspartate: step 1/1. Its function is as follows. Catalyzes the pyruvoyl-dependent decarboxylation of aspartate to produce beta-alanine. The polypeptide is Aspartate 1-decarboxylase (Corynebacterium jeikeium (strain K411)).